Reading from the N-terminus, the 503-residue chain is Cobyric acid synthase (503 aa).

The GATase cobBQ-type domain occupies 245–447 (DISIAIIRLP…LHGIFDEISL (203 aa)). Catalysis depends on Cys-326, which acts as the Nucleophile. The active site involves His-439.

The protein belongs to the CobB/CobQ family. CobQ subfamily.

It participates in cofactor biosynthesis; adenosylcobalamin biosynthesis. In terms of biological role, catalyzes amidations at positions B, D, E, and G on adenosylcobyrinic A,C-diamide. NH(2) groups are provided by glutamine, and one molecule of ATP is hydrogenolyzed for each amidation. This is Cobyric acid synthase from Alkaliphilus metalliredigens (strain QYMF).